The following is a 313-amino-acid chain: L-lactate dehydrogenase (313 aa).

Residues Val11, Asp32, Arg37, Tyr62, and Gly76–Val77 contribute to the NAD(+) site. Substrate-binding positions include Gln79, Arg85, and Asn117 to Asp120. NAD(+) contacts are provided by residues Ala115–Asn117 and Ser143. Substrate is bound at residue Asp148 to Arg151. Arg153 and His168 together coordinate beta-D-fructose 1,6-bisphosphate. The active-site Proton acceptor is the His175. A Phosphotyrosine modification is found at Tyr221. Residue Thr230 participates in substrate binding.

Belongs to the LDH/MDH superfamily. LDH family. Homotetramer.

It localises to the cytoplasm. It catalyses the reaction (S)-lactate + NAD(+) = pyruvate + NADH + H(+). The protein operates within fermentation; pyruvate fermentation to lactate; (S)-lactate from pyruvate: step 1/1. Its activity is regulated as follows. Allosterically activated by fructose 1,6-bisphosphate (FBP). Catalyzes the conversion of lactate to pyruvate. The protein is L-lactate dehydrogenase of Geotalea daltonii (strain DSM 22248 / JCM 15807 / FRC-32) (Geobacter daltonii).